The following is a 400-amino-acid chain: Diphosphomevalonate decarboxylase (400 aa).

Residue Ala-2 is modified to N-acetylalanine. Residues 23–26 (YWGK), Arg-78, 156–161 (SGSACR), and Thr-212 contribute to the (R)-5-diphosphomevalonate site.

It belongs to the diphosphomevalonate decarboxylase family. In terms of assembly, homodimer.

It is found in the cytoplasm. It carries out the reaction (R)-5-diphosphomevalonate + ATP = isopentenyl diphosphate + ADP + phosphate + CO2. Its pathway is steroid biosynthesis; cholesterol biosynthesis. Its function is as follows. Catalyzes the ATP dependent decarboxylation of (R)-5-diphosphomevalonate to form isopentenyl diphosphate (IPP). Functions in the mevalonate (MVA) pathway leading to isopentenyl diphosphate (IPP), a key precursor for the biosynthesis of isoprenoids and sterol synthesis. The sequence is that of Diphosphomevalonate decarboxylase (MVD) from Bos taurus (Bovine).